Consider the following 269-residue polypeptide: 4-hydroxy-tetrahydrodipicolinate reductase (269 aa).

Residues 9–14 (GAGGRM) and E35 contribute to the NAD(+) site. R36 provides a ligand contact to NADP(+). Residues 98-100 (GTT) and 122-125 (ASNY) each bind NAD(+). Residue H155 is the Proton donor/acceptor of the active site. H156 contributes to the (S)-2,3,4,5-tetrahydrodipicolinate binding site. K159 (proton donor) is an active-site residue. 165–166 (GT) serves as a coordination point for (S)-2,3,4,5-tetrahydrodipicolinate.

This sequence belongs to the DapB family.

Its subcellular location is the cytoplasm. The enzyme catalyses (S)-2,3,4,5-tetrahydrodipicolinate + NAD(+) + H2O = (2S,4S)-4-hydroxy-2,3,4,5-tetrahydrodipicolinate + NADH + H(+). The catalysed reaction is (S)-2,3,4,5-tetrahydrodipicolinate + NADP(+) + H2O = (2S,4S)-4-hydroxy-2,3,4,5-tetrahydrodipicolinate + NADPH + H(+). It participates in amino-acid biosynthesis; L-lysine biosynthesis via DAP pathway; (S)-tetrahydrodipicolinate from L-aspartate: step 4/4. In terms of biological role, catalyzes the conversion of 4-hydroxy-tetrahydrodipicolinate (HTPA) to tetrahydrodipicolinate. The polypeptide is 4-hydroxy-tetrahydrodipicolinate reductase (Actinobacillus pleuropneumoniae serotype 3 (strain JL03)).